A 444-amino-acid polypeptide reads, in one-letter code: Glutamate-1-semialdehyde 2,1-aminomutase (444 aa).

Lys267 is modified (N6-(pyridoxal phosphate)lysine).

This sequence belongs to the class-III pyridoxal-phosphate-dependent aminotransferase family. HemL subfamily. In terms of assembly, homodimer. It depends on pyridoxal 5'-phosphate as a cofactor.

The protein resides in the cytoplasm. It carries out the reaction (S)-4-amino-5-oxopentanoate = 5-aminolevulinate. The protein operates within porphyrin-containing compound metabolism; protoporphyrin-IX biosynthesis; 5-aminolevulinate from L-glutamyl-tRNA(Glu): step 2/2. In Xylella fastidiosa (strain Temecula1 / ATCC 700964), this protein is Glutamate-1-semialdehyde 2,1-aminomutase.